Consider the following 250-residue polypeptide: Anamorsin homolog 1 (250 aa).

The tract at residues 1 to 104 is N-terminal SAM-like domain; sequence MNLKITINQQ…KKLNIPQQEF (104 aa). The segment at 104–149 is linker; the sequence is FNNCYGKYDYIEQKFQNQINFFKQVDINGKQEIIDENELLDDGVQV. Residues C155, C162, C165, and C167 each coordinate [2Fe-2S] cluster. The fe-S binding site A stretch occupies residues 155 to 167; the sequence is CASKPRACANCTC. The [4Fe-4S] cluster site is built by C193, C196, C204, and C207. 2 consecutive short sequence motifs (cx2C motif) follow at residues 193 to 196 and 204 to 207; these read CGSC and CANC. Positions 193–207 are fe-S binding site B; it reads CGSCYLGDAFRCANC.

Belongs to the anamorsin family. In terms of assembly, monomer. [2Fe-2S] cluster is required as a cofactor. It depends on [4Fe-4S] cluster as a cofactor.

The protein resides in the cytoplasm. Its subcellular location is the mitochondrion intermembrane space. Component of the cytosolic iron-sulfur (Fe-S) protein assembly (CIA) machinery. Required for the maturation of extramitochondrial Fe-S proteins. Part of an electron transfer chain functioning in an early step of cytosolic Fe-S biogenesis, facilitating the de novo assembly of a [4Fe-4S] cluster on the cytosolic Fe-S scaffold complex. Electrons are transferred from NADPH via a FAD- and FMN-containing diflavin oxidoreductase. Together with the diflavin oxidoreductase, also required for the assembly of the diferric tyrosyl radical cofactor of ribonucleotide reductase (RNR), probably by providing electrons for reduction during radical cofactor maturation in the catalytic small subunit. The sequence is that of Anamorsin homolog 1 from Paramecium tetraurelia.